The sequence spans 441 residues: Cytochrome P450 monooxygenase cpsC (441 aa).

The disordered stretch occupies residues Ser175–Gln195. Polar residues predominate over residues Thr186 to Gln195. Heme is bound at residue Cys377.

The protein belongs to the cytochrome P450 family. Requires heme as cofactor.

The catalysed reaction is campesine D + reduced [NADPH--hemoprotein reductase] + O2 = campesine G + oxidized [NADPH--hemoprotein reductase] + 2 H2O + H(+). The protein operates within alkaloid biosynthesis. In terms of biological role, cytochrome P450 monooxygenase; part of the gene cluster that mediates the biosynthesis of campesine G, a dimeric indole piperazine alkaloid that shows good insecticidal activity Galleria mellonella. Within the pathway, cpsC catalyzes regioselective dehydrogenation reaction towards C2-N1 of the (2H)-indole ring of campesine D to yield the final product, campesine G. The non-canonical non-ribosomal peptide synthetase cpsA catalyzes the first steps of the pathway by producing L-tryptophanal and L-valinal from their respective amino-acids. These products condensate spontaneously to form trypyl-valyl pyrazine also known as didehydrocampesine A. The NmrA-like family domain-containing oxidoreductase cpsB is the next enzyme in cps pathway and reduces the unstable didehydrocampesine A to campesine A. The methyltransferase cpsF and the acetyltransferase cpsE both recognize N13 of piperazine ring to carry out methylation and acetylation of campesine A to produce campesine C and B, respectively. The cytochrome P450 monooxygenase cpsD then acts as a dimerase that catalyzes oxidative heterocoupling between campesine B and C to produce heterodimers with unexpected 6/5/6/6/6/6/5/6 eight-ring scaffold called campesine D. Finally,the cytochrome P450 monooxygenase cpsC is a regioselective dehydrogenase that catalyzes dehydrogenation reaction towards C2-N1 to produce campesine G. This chain is Cytochrome P450 monooxygenase cpsC, found in Aspergillus campestris (strain IBT 28561).